The chain runs to 112 residues: Glutaredoxin-C6 (112 aa).

In terms of domain architecture, Glutaredoxin spans 3 to 103 (LAKAKETVAS…PLLTEAGAIA (101 aa)). An intrachain disulfide couples Cys-23 to Cys-26.

It belongs to the glutaredoxin family. CPYC subfamily. Post-translationally, the N-terminus is blocked. As to expression, expressed in aleurone layer.

It localises to the cytoplasm. Its function is as follows. Has a glutathione-disulfide oxidoreductase activity in the presence of NADPH and glutathione reductase. Reduces low molecular weight disulfides and proteins. Possesses thioltransferase, dehydroascorbate reductase and GSH-dependent peroxidase activities in vitro. The sequence is that of Glutaredoxin-C6 (GRXC6) from Oryza sativa subsp. japonica (Rice).